The chain runs to 218 residues: MSDKQREAERQQSEDKAHSEAESAEAGQAPEAQAAEDGAESASGDSGDELTELQQALEEARARAEENWNECLRARAEMQNIQRRAQADVEKARKYAVEKIAGDLLGVKDSLEMGVKAAKEEGADPQKLLEGSELTLKMLSQVLERFNVQEIDPQGERFNPEHHEAVAAQPSHEHEPNTVLNVMQKGYALHDRVLRPAMVVVSQKAPEPPPSGSIDEQA.

Positions 1–21 (MSDKQREAERQQSEDKAHSEA) are enriched in basic and acidic residues. The tract at residues 1 to 66 (MSDKQREAER…LEEARARAEE (66 aa)) is disordered. The segment covering 24–36 (AEAGQAPEAQAAE) has biased composition (low complexity).

It belongs to the GrpE family. Homodimer.

It is found in the cytoplasm. Participates actively in the response to hyperosmotic and heat shock by preventing the aggregation of stress-denatured proteins, in association with DnaK and GrpE. It is the nucleotide exchange factor for DnaK and may function as a thermosensor. Unfolded proteins bind initially to DnaJ; upon interaction with the DnaJ-bound protein, DnaK hydrolyzes its bound ATP, resulting in the formation of a stable complex. GrpE releases ADP from DnaK; ATP binding to DnaK triggers the release of the substrate protein, thus completing the reaction cycle. Several rounds of ATP-dependent interactions between DnaJ, DnaK and GrpE are required for fully efficient folding. The protein is Protein GrpE of Alkalilimnicola ehrlichii (strain ATCC BAA-1101 / DSM 17681 / MLHE-1).